Consider the following 369-residue polypeptide: Erythronate-4-phosphate dehydrogenase (369 aa).

Residues S45 and T66 each contribute to the substrate site. D146 is an NAD(+) binding site. R209 is an active-site residue. D233 serves as a coordination point for NAD(+). Residue E238 is part of the active site. H255 (proton donor) is an active-site residue. Position 258 (G258) interacts with NAD(+).

This sequence belongs to the D-isomer specific 2-hydroxyacid dehydrogenase family. PdxB subfamily. As to quaternary structure, homodimer.

The protein localises to the cytoplasm. It carries out the reaction 4-phospho-D-erythronate + NAD(+) = (R)-3-hydroxy-2-oxo-4-phosphooxybutanoate + NADH + H(+). It participates in cofactor biosynthesis; pyridoxine 5'-phosphate biosynthesis; pyridoxine 5'-phosphate from D-erythrose 4-phosphate: step 2/5. Catalyzes the oxidation of erythronate-4-phosphate to 3-hydroxy-2-oxo-4-phosphonooxybutanoate. This is Erythronate-4-phosphate dehydrogenase from Porphyromonas gingivalis (strain ATCC BAA-308 / W83).